The following is a 214-amino-acid chain: Redox-sensing transcriptional repressor Rex (214 aa).

The H-T-H motif DNA-binding region spans 17-56 (LYYRIFKRFHADQVEKASSKQIADAMGIDSATVRRDFSYF). 91–96 (GCGNIG) contributes to the NAD(+) binding site.

Belongs to the transcriptional regulatory Rex family. In terms of assembly, homodimer.

The protein resides in the cytoplasm. Its function is as follows. Modulates transcription in response to changes in cellular NADH/NAD(+) redox state. This Streptococcus pyogenes serotype M4 (strain MGAS10750) protein is Redox-sensing transcriptional repressor Rex.